We begin with the raw amino-acid sequence, 251 residues long: uncharacterized protein (251 aa).

A signal peptide spans 1 to 25; the sequence is MRKKKFLSRFSFSSLFLLCGTLLSA. A lipid anchor (N-palmitoyl cysteine) is attached at cysteine 26. Cysteine 26 is lipidated: S-diacylglycerol cysteine.

Belongs to the MG439/MG440 family.

The protein localises to the cell membrane. This is an uncharacterized protein from Mycoplasma pneumoniae (strain ATCC 29342 / M129 / Subtype 1) (Mycoplasmoides pneumoniae).